Consider the following 333-residue polypeptide: MTKPIEKNMLRSRAIKLPEVTESMWEQVDEEHRNLVQEFLDAHSFRDKTRKQYYSSLRQFFWWVHTSLNGKKLYKISKRDFIRYQSFLKNRGMSSSGIALKKAGVSSLNNYIENVVAEDDHNYEKFRNFTRGLPAIPKTTTYEKVKVTYDDYKLMMDALKEDENYLGMAWLATAFNVGGRRAELIQLKTEILDYPVPEGQSYVMSHKVFGKGKGEGKPLEYMINTEALEYLRLWHEKRGYDHEYLFTTQYGGEPKQMSESWADYFCSDVLSDILGRRINPHLFKASCITYLLEVKKVKIELISKYVAHHEDVSTTIKHYDLRDFEEEKNQIFV.

One can recognise a Core-binding (CB) domain in the interval 30–113 (EEHRNLVQEF…GVSSLNNYIE (84 aa)). One can recognise a Tyr recombinase domain in the interval 142–332 (YEKVKVTYDD…DFEEEKNQIF (191 aa)). Catalysis depends on residues arginine 180, lysine 211, histidine 281, and histidine 308. The active-site O-(3'-phospho-DNA)-tyrosine intermediate is tyrosine 319.

This sequence belongs to the 'phage' integrase family.

The sequence is that of SPbeta prophage-derived recombinase-like protein YomM (yomM) from Bacillus subtilis (strain 168).